A 579-amino-acid polypeptide reads, in one-letter code: Adenine/guanine permease AZG1 (579 aa).

12 consecutive transmembrane segments (helical) span residues 52-72 (AGTA…SILS), 131-151 (LIVA…LMAN), 183-203 (TALA…AIGF), 221-241 (AGIG…IGLV), 260-280 (ISLA…AGGS), 292-312 (MESP…YCLV), 320-340 (IYGI…VTAF), 379-399 (FWEA…GTLY), 414-434 (FAGQ…GSLL), 459-479 (AITV…LASI), 480-500 (PAWA…KSVT), and 514-534 (FVTM…IGGI).

The protein belongs to the nucleobase:cation symporter-2 (NCS2) (TC 2.A.40) family. Azg-like subfamily.

It localises to the membrane. Its function is as follows. Transports natural purines (adenine and guanine) as well as purine analogs. Confers sensitivity to 8-azaadenine and 8-azaguanine (8-azg). This chain is Adenine/guanine permease AZG1 (AZG1), found in Arabidopsis thaliana (Mouse-ear cress).